The primary structure comprises 216 residues: MSKVSRDTLYEAVKEVQAGSRRKKRKFLETVELQISLKNYDPQKDKRFSGTVRLKTTPRPKFSVCVLGDQQHCDEAKAAELPHMDIEALKKLNKNKKLVKKLAKKYDAFLASESLIKQIPRILGPGLNKAGKFPSLLTHNENLGTKVDEVKSTIKFQMKKVLCLAVAVGHVKMSEEELVYNIHLAVNFLVSLLKKNWQNVRALYIKSTMGKPQRLY.

It belongs to the universal ribosomal protein uL1 family. In terms of assembly, component of the large ribosomal subunit.

The protein localises to the cytoplasm. Component of the large ribosomal subunit. The ribosome is a large ribonucleoprotein complex responsible for the synthesis of proteins in the cell. The sequence is that of Large ribosomal subunit protein uL1 (rpl10a) from Danio rerio (Zebrafish).